Reading from the N-terminus, the 238-residue chain is Probable transcriptional regulatory protein SPH_2064 (238 aa).

The protein belongs to the TACO1 family. YeeN subfamily.

It localises to the cytoplasm. The polypeptide is Probable transcriptional regulatory protein SPH_2064 (Streptococcus pneumoniae (strain Hungary19A-6)).